Reading from the N-terminus, the 82-residue chain is Small ribosomal subunit protein bS18 (82 aa).

The disordered stretch occupies residues 1 to 25 (MADTSSSQARRPFHRRRKTCPFSGA).

The protein belongs to the bacterial ribosomal protein bS18 family. As to quaternary structure, part of the 30S ribosomal subunit. Forms a tight heterodimer with protein bS6.

Functionally, binds as a heterodimer with protein bS6 to the central domain of the 16S rRNA, where it helps stabilize the platform of the 30S subunit. The chain is Small ribosomal subunit protein bS18 from Agrobacterium fabrum (strain C58 / ATCC 33970) (Agrobacterium tumefaciens (strain C58)).